The following is a 447-amino-acid chain: Serine/threonine-protein phosphatase 2A 55 kDa regulatory subunit B gamma isoform (447 aa).

7 WD repeats span residues 22 to 61 (TEADIISTVEFNHTGELLATGDKGGRVVIFQREPESKNAP), 87 to 128 (EIEE…KRPE), 171 to 209 (GHTYHINSISVNSDCETYMSADDLRINLWHLAVTDRSFN), 220 to 260 (DLTE…LCDK), 279 to 317 (EIISSVSDVKFSHSGRYMLTRDYLTVKVWDLNMEARPIE), 334 to 375 (ENDC…DVTL), and 410 to 446 (DFTKKILHTAWHPAENIIAIAATNNLYIFQDKVNSDV).

The protein belongs to the phosphatase 2A regulatory subunit B family. In terms of assembly, PP2A consists of a common heterodimeric core enzyme, composed of a 36 kDa catalytic subunit (subunit C) and a 65 kDa constant regulatory subunit (PR65 or subunit A), that associates with a variety of regulatory subunits. Proteins that associate with the core dimer include three families of regulatory subunits B (the R2/B/PR55/B55, R3/B''/PR72/PR130/PR59 and R5/B'/B56 families), the 48 kDa variable regulatory subunit, viral proteins, and cell signaling molecules. Interacts with IER5. In terms of tissue distribution, highly expressed in brain.

The B regulatory subunit might modulate substrate selectivity and catalytic activity, and might also direct the localization of the catalytic enzyme to a particular subcellular compartment. This chain is Serine/threonine-protein phosphatase 2A 55 kDa regulatory subunit B gamma isoform (PPP2R2C), found in Oryctolagus cuniculus (Rabbit).